Here is a 190-residue protein sequence, read N- to C-terminus: Elongation factor P-like protein (190 aa).

The protein belongs to the elongation factor P family.

The protein is Elongation factor P-like protein of Pseudoalteromonas atlantica (strain T6c / ATCC BAA-1087).